Reading from the N-terminus, the 135-residue chain is Large ribosomal subunit protein bL17 (135 aa).

It belongs to the bacterial ribosomal protein bL17 family. In terms of assembly, part of the 50S ribosomal subunit. Contacts protein L32.

The protein is Large ribosomal subunit protein bL17 of Listeria monocytogenes serotype 4b (strain CLIP80459).